The following is a 1074-amino-acid chain: DNA-directed RNA polymerase subunit beta (1074 aa).

Belongs to the RNA polymerase beta chain family. In plastids the minimal PEP RNA polymerase catalytic core is composed of four subunits: alpha, beta, beta', and beta''. When a (nuclear-encoded) sigma factor is associated with the core the holoenzyme is formed, which can initiate transcription.

Its subcellular location is the plastid. It is found in the chloroplast. It carries out the reaction RNA(n) + a ribonucleoside 5'-triphosphate = RNA(n+1) + diphosphate. DNA-dependent RNA polymerase catalyzes the transcription of DNA into RNA using the four ribonucleoside triphosphates as substrates. This Chara vulgaris (Common stonewort) protein is DNA-directed RNA polymerase subunit beta.